A 266-amino-acid polypeptide reads, in one-letter code: DLA class II histocompatibility antigen, DR-1 beta chain (266 aa).

The signal sequence occupies residues 1 to 29 (MVCLCFLGGSWMTALMLILMVLNPPFAWA). The interval 30–124 (RDTPPHFLEV…IESFTVQRRV (95 aa)) is beta-1. Residues 30–227 (RDTPPHFLEV…RAQSDSAQSK (198 aa)) lie on the Extracellular side of the membrane. 2 cysteine pairs are disulfide-bonded: Cys-44/Cys-108 and Cys-146/Cys-202. N-linked (GlcNAc...) asparagine glycosylation occurs at Asn-48. The segment at 125–227 (EPTVTVYPTK…RAQSDSAQSK (103 aa)) is beta-2. An Ig-like C1-type domain is found at 126–214 (PTVTVYPTKT…EHPSLTSPVT (89 aa)). A helical membrane pass occupies residues 228 to 250 (MLSGIGGFVLGLLFLAVGLFIYF). Topologically, residues 251 to 266 (RNQKGHSGLQPTGLLS) are cytoplasmic.

It belongs to the MHC class II family.

The protein resides in the membrane. The polypeptide is DLA class II histocompatibility antigen, DR-1 beta chain (Canis lupus familiaris (Dog)).